Here is a 380-residue protein sequence, read N- to C-terminus: Flap endonuclease 1 (380 aa).

Residues 1–104 (MGIQGLAKLI…GELAKRSERR (104 aa)) form an N-domain region. The residue at position 19 (R19) is a Symmetric dimethylarginine; by PRMT5. D34 is a binding site for Mg(2+). Residues R47 and R70 each coordinate DNA. K80 carries the N6-acetyllysine modification. Position 86 (D86) interacts with Mg(2+). 2 positions are modified to symmetric dimethylarginine; by PRMT5: R100 and R104. Residues 122 to 253 (EVEKFTKRLV…KRAVDLIQKH (132 aa)) are I-domain. Residues E158, E160, D179, and D181 each contribute to the Mg(2+) site. E158 is a binding site for DNA. The residue at position 187 (S187) is a Phosphoserine; by CDK2. The residue at position 192 (R192) is a Symmetric dimethylarginine; by PRMT5. Phosphoserine is present on S197. Residues G231 and D233 each coordinate DNA. Position 233 (D233) interacts with Mg(2+). Residues S255, S293, and S335 each carry the phosphoserine modification. The tract at residues 327-380 (RLSKSRQGSTQGRLDDFFKVTGSLSSAKRKEPEPKGSTKKKAKTGAAGKFKRGK) is disordered. Phosphothreonine is present on T336. An interaction with PCNA region spans residues 336 to 344 (TQGRLDDFF). At K354 the chain carries N6-acetyllysine. A compositionally biased stretch (basic residues) spans 363–380 (STKKKAKTGAAGKFKRGK). At T364 the chain carries Phosphothreonine. Residues K375, K377, and K380 each carry the N6-acetyllysine modification.

Belongs to the XPG/RAD2 endonuclease family. FEN1 subfamily. As to quaternary structure, interacts with PCNA. Three molecules of FEN1 bind to one PCNA trimer with each molecule binding to one PCNA monomer. PCNA stimulates the nuclease activity without altering cleavage specificity. The C-terminal domain binds EP300; can bind simultaneously to both PCNA and EP300. Interacts with DDX11; this interaction is direct and increases flap endonuclease activity of FEN1. Interacts with WDR4; regulating its endonuclease activity. Interacts with POLB. Requires Mg(2+) as cofactor. Acetylated by EP300. Acetylation inhibits both endonuclease and exonuclease activity. Acetylation also reduces DNA-binding activity but does not affect interaction with PCNA or EP300. In terms of processing, phosphorylation upon DNA damage induces relocalization to the nuclear plasma. Phosphorylation at Ser-187 by CDK2 occurs during late S-phase and results in dissociation from PCNA. Post-translationally, methylation at Arg-192 by PRMT5 impedes Ser-187 phosphorylation and increases interaction with PCNA.

The protein localises to the nucleus. Its subcellular location is the nucleolus. It localises to the nucleoplasm. It is found in the mitochondrion. Functionally, structure-specific nuclease with 5'-flap endonuclease and 5'-3' exonuclease activities involved in DNA replication and repair. During DNA replication, cleaves the 5'-overhanging flap structure that is generated by displacement synthesis when DNA polymerase encounters the 5'-end of a downstream Okazaki fragment. It enters the flap from the 5'-end and then tracks to cleave the flap base, leaving a nick for ligation. Also involved in the long patch base excision repair (LP-BER) pathway, by cleaving within the apurinic/apyrimidinic (AP) site-terminated flap. Acts as a genome stabilization factor that prevents flaps from equilibrating into structures that lead to duplications and deletions. Also possesses 5'-3' exonuclease activity on nicked or gapped double-stranded DNA, and exhibits RNase H activity. Also involved in replication and repair of rDNA and in repairing mitochondrial DNA. The polypeptide is Flap endonuclease 1 (Macaca fascicularis (Crab-eating macaque)).